A 1207-amino-acid polypeptide reads, in one-letter code: DNA-directed RNA polymerase subunit beta' (1207 aa).

4 residues coordinate Zn(2+): Cys-60, Cys-62, Cys-75, and Cys-78. Mg(2+) is bound by residues Asp-450, Asp-452, and Asp-454. Zn(2+) is bound by residues Cys-819, Cys-893, Cys-900, and Cys-903.

The protein belongs to the RNA polymerase beta' chain family. In terms of assembly, the RNAP catalytic core consists of 2 alpha, 1 beta, 1 beta' and 1 omega subunit. When a sigma factor is associated with the core the holoenzyme is formed, which can initiate transcription. Mg(2+) serves as cofactor. It depends on Zn(2+) as a cofactor.

It catalyses the reaction RNA(n) + a ribonucleoside 5'-triphosphate = RNA(n+1) + diphosphate. Functionally, DNA-dependent RNA polymerase catalyzes the transcription of DNA into RNA using the four ribonucleoside triphosphates as substrates. This is DNA-directed RNA polymerase subunit beta' from Streptococcus pyogenes serotype M3 (strain ATCC BAA-595 / MGAS315).